Consider the following 1179-residue polypeptide: Integrin alpha-1 (1179 aa).

Positions 1–28 (MVPRRPASLEVTVACIWLLTVILGVCIS) are cleaved as a signal peptide. The Extracellular segment spans residues 29 to 1141 (FNVDVKNSMS…SKDGLPGRVP (1113 aa)). One copy of the FG-GAP 1 repeat lies at 30 to 91 (NVDVKNSMSF…CPVGRERSMP (62 aa)). A disulfide bridge connects residues Cys-82 and Cys-92. Residues Asn-100, Asn-105, Asn-112, Asn-217, Asn-317, Asn-341, Asn-402, Asn-418, and Asn-459 are each glycosylated (N-linked (GlcNAc...) asparagine). The stretch at 101–160 (TSIPNVTEIKENMTFGSTLVTNPKGGFLACGPLYAYRCGHLHYTTGICSDVSPTFQVVNS) is one FG-GAP 2 repeat. The region spanning 175–364 (IVLDGSNSIY…LGERIFALEA (190 aa)) is the VWFA domain. An FG-GAP 3 repeat occupies 365–417 (TADQSAASFEMEMSQTGFSAHYSQDWVMLGAVGAYDWNGTVVMQKANQIVIPH). FG-GAP repeat units lie at residues 422–474 (QTEP…DGDV), 475–537 (NILQ…RFEY), 556–614 (SCTK…TIRK), and 618–678 (QRIP…FEPN). Residues Asp-497, Asp-499, Asp-501, and Asp-505 each contribute to the Ca(2+) site. A glycan (N-linked (GlcNAc...) asparagine) is linked at Asn-531. Ca(2+) contacts are provided by Asp-579, Asn-581, Asp-583, Asp-587, Asp-641, Asn-643, Asp-645, and Asp-649. The cysteines at positions 687 and 696 are disulfide-linked. Asn-698, Asn-747, and Asn-779 each carry an N-linked (GlcNAc...) asparagine glycan. Cysteines 702 and 755 form a disulfide. Residues Cys-807 and Cys-813 are joined by a disulfide bond. Asn-839, Asn-882, Asn-907, Asn-938, Asn-965, Asn-973, and Asn-1007 each carry an N-linked (GlcNAc...) asparagine glycan. Cys-877 and Cys-885 are disulfide-bonded. Cystine bridges form between Cys-1029/Cys-1062 and Cys-1065/Cys-1072. N-linked (GlcNAc...) asparagine glycans are attached at residues Asn-1083, Asn-1102, and Asn-1113. Residues 1142–1164 (LWVILLSAFAGLLLLMLLILALW) traverse the membrane as a helical segment. At 1165–1179 (KIGFFKRPLKKKMEK) the chain is on the cytoplasmic side. Residues 1167–1171 (GFFKR) carry the GFFKR motif motif.

It belongs to the integrin alpha chain family. Heterodimer of an alpha and a beta subunit. Alpha-1 associates with beta-1. Interacts with RAB21. Interacts (via cytoplasmic domain) with PTPN2; activates PTPN2 phosphatase activity towards EGFR and negatively regulates EGF signaling.

Its subcellular location is the membrane. In terms of biological role, integrin alpha-1/beta-1 is a receptor for laminin and collagen. It recognizes the proline-hydroxylated sequence G-F-P-G-E-R in collagen. Involved in anchorage-dependent, negative regulation of EGF-stimulated cell growth. This Mus musculus (Mouse) protein is Integrin alpha-1 (Itga1).